We begin with the raw amino-acid sequence, 566 residues long: Putative lipase ATG15 (566 aa).

Residues 1-17 (MGSKHKKNASKSLRAFS) lie on the Cytoplasmic side of the membrane. Residues 18–38 (FIILSASIALVYIFNPVKLIF) traverse the membrane as a helical; Signal-anchor for type II membrane protein segment. The Lumenal portion of the chain corresponds to 39-566 (PSSIIRFHHG…CVEWGDEEDA (528 aa)). N-linked (GlcNAc...) asparagine glycosylation is found at asparagine 264 and asparagine 348. Serine 366 functions as the Charge relay system in the catalytic mechanism. N-linked (GlcNAc...) asparagine glycosylation is present at asparagine 483. The disordered stretch occupies residues 507 to 545 (DSLDDEPPLPNPLRPGKPSTTSSSQHHTSTTTTTETSRP). Residues 522–543 (GKPSTTSSSQHHTSTTTTTETS) are compositionally biased toward low complexity.

It belongs to the AB hydrolase superfamily. Lipase family. Binds to both phosphatidylinositol (PI) and phosphatidylinositol 3,5-bisphosphate (PIP2).

The protein localises to the endosome. It is found in the multivesicular body membrane. The protein resides in the prevacuolar compartment membrane. It catalyses the reaction a triacylglycerol + H2O = a diacylglycerol + a fatty acid + H(+). Its function is as follows. Lipase which is essential for lysis of subvacuolar cytoplasm to vacuole targeted bodies and intravacuolar autophagic bodies. Involved in the lysis of intravacuolar multivesicular body (MVB) vesicles. The intravacuolar membrane disintegration by ATG15 is critical to life span extension. In Meyerozyma guilliermondii (strain ATCC 6260 / CBS 566 / DSM 6381 / JCM 1539 / NBRC 10279 / NRRL Y-324) (Yeast), this protein is Putative lipase ATG15 (ATG15).